The primary structure comprises 269 residues: Energy-coupling factor transporter ATP-binding protein EcfA1 (269 aa).

The region spanning Ile8–Asp242 is the ABC transporter domain. Gly42 to Ser49 lines the ATP pocket.

It belongs to the ABC transporter superfamily. Energy-coupling factor EcfA family. As to quaternary structure, forms a stable energy-coupling factor (ECF) transporter complex composed of 2 membrane-embedded substrate-binding proteins (S component), 2 ATP-binding proteins (A component) and 2 transmembrane proteins (T component).

The protein localises to the cell membrane. Its function is as follows. ATP-binding (A) component of a common energy-coupling factor (ECF) ABC-transporter complex. Unlike classic ABC transporters this ECF transporter provides the energy necessary to transport a number of different substrates. This is Energy-coupling factor transporter ATP-binding protein EcfA1 from Staphylococcus aureus (strain MSSA476).